The primary structure comprises 86 residues: Putative membrane protein insertion efficiency factor (86 aa).

The protein belongs to the UPF0161 family.

Its subcellular location is the cell inner membrane. Its function is as follows. Could be involved in insertion of integral membrane proteins into the membrane. The protein is Putative membrane protein insertion efficiency factor of Mannheimia succiniciproducens (strain KCTC 0769BP / MBEL55E).